Reading from the N-terminus, the 700-residue chain is Polyribonucleotide nucleotidyltransferase (700 aa).

Asp-485 and Asp-491 together coordinate Mg(2+). The KH domain maps to 552–611 (PRITTLKINPEKIRDVIGKGGATIRALTEETGTTIELEDDGTVKIASANGDATKEAIRRI). Residues 621–689 (GTVYNGKVVR…RQGRVRLSMK (69 aa)) enclose the S1 motif domain.

This sequence belongs to the polyribonucleotide nucleotidyltransferase family. As to quaternary structure, component of the RNA degradosome, which is a multiprotein complex involved in RNA processing and mRNA degradation. Mg(2+) serves as cofactor.

Its subcellular location is the cytoplasm. It carries out the reaction RNA(n+1) + phosphate = RNA(n) + a ribonucleoside 5'-diphosphate. Involved in mRNA degradation. Catalyzes the phosphorolysis of single-stranded polyribonucleotides processively in the 3'- to 5'-direction. The sequence is that of Polyribonucleotide nucleotidyltransferase from Shewanella loihica (strain ATCC BAA-1088 / PV-4).